Consider the following 467-residue polypeptide: Ethanolamine-phosphate phospho-lyase homolog 1 (467 aa).

Residue Lys-307 is modified to N6-(pyridoxal phosphate)lysine.

Belongs to the class-III pyridoxal-phosphate-dependent aminotransferase family. Pyridoxal 5'-phosphate is required as a cofactor.

In Caenorhabditis elegans, this protein is Ethanolamine-phosphate phospho-lyase homolog 1.